Reading from the N-terminus, the 142-residue chain is Large ribosomal subunit protein uL13 (142 aa).

Belongs to the universal ribosomal protein uL13 family. As to quaternary structure, part of the 50S ribosomal subunit.

Functionally, this protein is one of the early assembly proteins of the 50S ribosomal subunit, although it is not seen to bind rRNA by itself. It is important during the early stages of 50S assembly. This Leptothrix cholodnii (strain ATCC 51168 / LMG 8142 / SP-6) (Leptothrix discophora (strain SP-6)) protein is Large ribosomal subunit protein uL13.